Consider the following 114-residue polypeptide: Photosystem II reaction center Psb28 protein (114 aa).

This sequence belongs to the Psb28 family. Part of the photosystem II complex.

The protein localises to the plastid. The protein resides in the chloroplast thylakoid membrane. The protein is Photosystem II reaction center Psb28 protein of Thalassiosira pseudonana (Marine diatom).